An 839-amino-acid polypeptide reads, in one-letter code: Septin-interacting protein 1 (839 aa).

Positions 22–164 are disordered; that stretch reads INRPRGRQSR…ASERNVGAWE (143 aa). A phosphoserine mark is found at Ser43 and Ser47. Thr53 is subject to Phosphothreonine. Over residues 88-101 the composition is skewed to basic and acidic residues; the sequence is LQADDEKGSQKEGA. The span at 102 to 111 shows a compositional bias: acidic residues; sequence EADQGEESDD. The span at 140–149 shows a compositional bias: polar residues; sequence SRKQPSTTFQ. Residues 167-213 form the G-patch domain; it reads TRGIGAKLLLQMGYEPGKGLGKDLQGISHPVQAHVRKGRGAIGAYGP. Positions 363 to 411 form a coiled coil; it reads IDNQERECSSQQAALESEHRKLEEIVQLERNHIRTLEESLERVERLIDN.

It belongs to the TFP11/STIP family. In terms of assembly, identified in the spliceosome C complex. Interacts with pnut.

Its subcellular location is the nucleus. In terms of biological role, may be involved in pre-mRNA splicing. This Drosophila melanogaster (Fruit fly) protein is Septin-interacting protein 1 (sip1).